Consider the following 172-residue polypeptide: Myosin regulatory light chain 2, smooth muscle major isoform (172 aa).

Residues 1 to 16 show a composition bias toward basic residues; it reads MSSKRAKAKTTKKRPQ. The segment at 1–20 is disordered; the sequence is MSSKRAKAKTTKKRPQRATS. At Ser-2 the chain carries N-acetylserine. 3 EF-hand domains span residues 29-64, 98-133, and 134-169; these read SQIQ…MGKN, DPED…MGDR, and FTDE…GAKD. Ca(2+) contacts are provided by Asp-42, Asn-44, Asp-46, and Asp-53.

Myosin is a hexamer of 2 heavy chains and 4 light chains.

Myosin regulatory subunit that plays an important role in regulation of both smooth muscle and nonmuscle cell contractile activity. Implicated in cytokinesis, receptor capping, and cell locomotion. This is Myosin regulatory light chain 2, smooth muscle major isoform from Gallus gallus (Chicken).